Reading from the N-terminus, the 190-residue chain is Peptide deformylase (190 aa).

Residues Cys-94 and His-136 each contribute to the Fe cation site. Glu-137 is a catalytic residue. Position 140 (His-140) interacts with Fe cation.

The protein belongs to the polypeptide deformylase family. Fe(2+) is required as a cofactor.

It carries out the reaction N-terminal N-formyl-L-methionyl-[peptide] + H2O = N-terminal L-methionyl-[peptide] + formate. In terms of biological role, removes the formyl group from the N-terminal Met of newly synthesized proteins. Requires at least a dipeptide for an efficient rate of reaction. N-terminal L-methionine is a prerequisite for activity but the enzyme has broad specificity at other positions. In Chlorobium phaeovibrioides (strain DSM 265 / 1930) (Prosthecochloris vibrioformis (strain DSM 265)), this protein is Peptide deformylase.